The primary structure comprises 305 residues: MHTDLRADQKAEVLIEALPWLEEFAGQRIVVKYGGNAMVDDHLKQCFAEDMVFLRQVGLHPIVVHGGGPQISHMLKALGIKSEFKGGLRVTTPEAMDVVRMVLTGKVSRELVGLINAHGPLAVGLSGEDGGLFSAMQRRPIIDGKPTDIGLVGDVVSVDASAVEDLVAAGRIPVVSSVAPNEEDATEVLNVNADSAAAALAAAVGARKLVILTDVDGLYADWPDKNSLIGRIGVENLRDMLPDLESGMRPKMEACVRAIDGGVPQAHIIDGRKPHSILNEIFTSAGIGTMVMPDEGLEMRSSYGY.

Substrate-binding positions include 67–68, R89, and N190; that span reads GG.

It belongs to the acetylglutamate kinase family. ArgB subfamily.

It localises to the cytoplasm. It carries out the reaction N-acetyl-L-glutamate + ATP = N-acetyl-L-glutamyl 5-phosphate + ADP. It functions in the pathway amino-acid biosynthesis; L-arginine biosynthesis; N(2)-acetyl-L-ornithine from L-glutamate: step 2/4. Functionally, catalyzes the ATP-dependent phosphorylation of N-acetyl-L-glutamate. This chain is Acetylglutamate kinase, found in Bifidobacterium longum subsp. infantis (strain ATCC 15697 / DSM 20088 / JCM 1222 / NCTC 11817 / S12).